The sequence spans 92 residues: Ribonuclease P protein component 1 (92 aa).

This sequence belongs to the eukaryotic/archaeal RNase P protein component 1 family. As to quaternary structure, consists of a catalytic RNA component and at least 4-5 protein subunits.

Its subcellular location is the cytoplasm. The enzyme catalyses Endonucleolytic cleavage of RNA, removing 5'-extranucleotides from tRNA precursor.. Its function is as follows. Part of ribonuclease P, a protein complex that generates mature tRNA molecules by cleaving their 5'-ends. The protein is Ribonuclease P protein component 1 of Staphylothermus marinus (strain ATCC 43588 / DSM 3639 / JCM 9404 / F1).